The primary structure comprises 320 residues: MITINSKEHILEQKYRPSSIDECILPAYDHETFKSLVSKGKLPHIILHSPSPGTGKTTVAKALCNDINAEMMFVNGSDCKIDFVRGPLTAFARSVSMEGKPKVIVIDEFDRSGLAESQRHLRTFMEEFSSNCSIIITANNIDGIIEPLRSRCRVIEFGRPTEEDKISMMKKMIHRMVEICKNENIEIADMKVVAALVKKNFPDFRRTIGQLDQYSSKGVLDAGILSIVTNDRGTVSDVIEAMKNKDIKQLRALAPKYAADYSWFIDKLVSECYDQVAPGKSIISLYEIAGENNKFHGLASNIELHVMYMLLQLTCELTWK.

ATP-binding positions include 12 to 15, isoleucine 24, 53 to 58, and arginine 205; these read EQKY and GTGKTT.

This sequence belongs to the Tevenvirinae sliding-clamp-loader large subunit family. As to quaternary structure, the sliding-clamp-loader consists of 4 large subunits and 1 small subunit. Interacts with the sliding clamp; this interaction allows the sliding-clamp-loader to open the sliding clamp. Part of the replicase complex that includes the DNA polymerase, the polymerase clamp, the clamp loader complex, the single-stranded DNA binding protein, the primase, the helicase and the helicase assembly factor.

Functionally, forms the sliding-clamp-loader together with the small subunit. Functions as an ATPase enzyme. The clamp loader holds the clamp in an open conformation and places it onto the DNA. 4 ATP molecules must bind to the sliding-clamp-loader before the latter can open the sliding clamp. ATP hydrolysis triggers the detachment of the sliding clamp from the sliding-clamp-loader, freeing the sliding clamp to track along DNA. The sequence is that of Sliding-clamp-loader large subunit (44) from Escherichia phage RB69 (Bacteriophage RB69).